A 231-amino-acid chain; its full sequence is 2-C-methyl-D-erythritol 4-phosphate cytidylyltransferase (231 aa).

It belongs to the IspD/TarI cytidylyltransferase family. IspD subfamily.

The catalysed reaction is 2-C-methyl-D-erythritol 4-phosphate + CTP + H(+) = 4-CDP-2-C-methyl-D-erythritol + diphosphate. It functions in the pathway isoprenoid biosynthesis; isopentenyl diphosphate biosynthesis via DXP pathway; isopentenyl diphosphate from 1-deoxy-D-xylulose 5-phosphate: step 2/6. Its function is as follows. Catalyzes the formation of 4-diphosphocytidyl-2-C-methyl-D-erythritol from CTP and 2-C-methyl-D-erythritol 4-phosphate (MEP). The sequence is that of 2-C-methyl-D-erythritol 4-phosphate cytidylyltransferase from Bacillus licheniformis (strain ATCC 14580 / DSM 13 / JCM 2505 / CCUG 7422 / NBRC 12200 / NCIMB 9375 / NCTC 10341 / NRRL NRS-1264 / Gibson 46).